Consider the following 60-residue polypeptide: Metallothionein B (60 aa).

Residues Met1–Cys28 form a beta region. Cys4, Cys6, Cys12, Cys14, Cys18, Cys20, Cys23, Cys25, Cys28, Cys32, Cys33, Cys35, Cys36, Cys40, Cys43, Cys47, Cys49, Cys54, Cys58, and Cys59 together coordinate a divalent metal cation. The interval Lys29 to Gln60 is alpha.

Belongs to the metallothionein superfamily. Type 1 family.

Functionally, metallothioneins have a high content of cysteine residues that bind various heavy metals. The protein is Metallothionein B (mtb) of Trematomus bernacchii (Emerald rockcod).